Here is a 25-residue protein sequence, read N- to C-terminus: LASP1 neighbor protein (25 aa).

Residues 4-24 (IFILMFFAIIGLVILSYIIYL) form a helical membrane-spanning segment.

It localises to the membrane. In terms of biological role, may play a key role in the skin fibroblasts (FBs)-keratinocyte-like cells (KLCs). This chain is LASP1 neighbor protein, found in Homo sapiens (Human).